A 214-amino-acid polypeptide reads, in one-letter code: MGEGHGDTFEGVSTDRLKLELLEEIHMKDVVQLSTLEIRHKIAELEANLNGDLAGSEWKTRYETQLELNDQLEKQIVSLKEKMEKMRGNPSDRLSSIRVYEKMPVESLNVLLKQLEKEKRSLESQVKEYAFRLEQESKAYHRTNNERRSYIAEMTQVSGSNQVSKRQQMDPLPRMKESPVKTGRHNSMNQKTTNAKKGPVKKVPRSNHLPKLNP.

A coiled-coil region spans residues 56-138 (SEWKTRYETQ…YAFRLEQESK (83 aa)). The segment at 154 to 214 (MTQVSGSNQV…RSNHLPKLNP (61 aa)) is disordered. Polar residues-rich tracts occupy residues 155-166 (TQVSGSNQVSKR) and 185-195 (HNSMNQKTTNA).

Belongs to the CCDC169 family.

This chain is Coiled-coil domain-containing protein 169 (Ccdc169), found in Mus musculus (Mouse).